The chain runs to 909 residues: Nitrate reductase [NADH] (909 aa).

Mo-molybdopterin is bound at residue C187. Residues 535-610 (SKMYSMSEVK…LEDFRIGELI (76 aa)) enclose the Cytochrome b5 heme-binding domain. Residues H570 and H593 each coordinate heme. Residues 652–764 (REKIPCKLVD…KGPLGHIEYQ (113 aa)) form the FAD-binding FR-type domain. FAD contacts are provided by residues 704-707 (RAYT), 721-725 (VVKIY), F726, F733, 738-740 (QMS), and T791.

The protein belongs to the nitrate reductase family. In terms of assembly, homodimer. FAD is required as a cofactor. Heme serves as cofactor. The cofactor is Mo-molybdopterin.

The enzyme catalyses nitrite + NAD(+) + H2O = nitrate + NADH + H(+). With respect to regulation, regulated by the nitrogen source and controlled by the circadian rhythm. Nitrate reductase is a key enzyme involved in the first step of nitrate assimilation in plants, fungi and bacteria. This Petunia hybrida (Petunia) protein is Nitrate reductase [NADH] (NIA).